The primary structure comprises 145 residues: Transcriptional regulator SlyA (145 aa).

The 134-residue stretch at 2–135 (ELPLGSDLAR…LALLVARLEK (134 aa)) folds into the HTH marR-type domain. The segment at residues 49–72 (QIQLAKAIGIEQPSLVRTLDQLEE) is a DNA-binding region (H-T-H motif).

The protein belongs to the SlyA family. In terms of assembly, homodimer.

In terms of biological role, transcription regulator that can specifically activate or repress expression of target genes. This is Transcriptional regulator SlyA from Pectobacterium carotovorum subsp. carotovorum (strain PC1).